Consider the following 156-residue polypeptide: ATP synthase subunit b (156 aa).

The chain crosses the membrane as a helical span at residues 7–27 (IFFQMLVFFVLGWFTMKFVWP).

This sequence belongs to the ATPase B chain family. In terms of assembly, F-type ATPases have 2 components, F(1) - the catalytic core - and F(0) - the membrane proton channel. F(1) has five subunits: alpha(3), beta(3), gamma(1), delta(1), epsilon(1). F(0) has three main subunits: a(1), b(2) and c(10-14). The alpha and beta chains form an alternating ring which encloses part of the gamma chain. F(1) is attached to F(0) by a central stalk formed by the gamma and epsilon chains, while a peripheral stalk is formed by the delta and b chains.

Its subcellular location is the cell inner membrane. In terms of biological role, f(1)F(0) ATP synthase produces ATP from ADP in the presence of a proton or sodium gradient. F-type ATPases consist of two structural domains, F(1) containing the extramembraneous catalytic core and F(0) containing the membrane proton channel, linked together by a central stalk and a peripheral stalk. During catalysis, ATP synthesis in the catalytic domain of F(1) is coupled via a rotary mechanism of the central stalk subunits to proton translocation. Its function is as follows. Component of the F(0) channel, it forms part of the peripheral stalk, linking F(1) to F(0). The polypeptide is ATP synthase subunit b (Bordetella petrii (strain ATCC BAA-461 / DSM 12804 / CCUG 43448)).